Reading from the N-terminus, the 520-residue chain is Bifunctional purine biosynthesis protein PurH (520 aa).

The region spanning 1–147 (MAKIGRALIS…KNNRDVTVVV (147 aa)) is the MGS-like domain.

This sequence belongs to the PurH family.

The enzyme catalyses (6R)-10-formyltetrahydrofolate + 5-amino-1-(5-phospho-beta-D-ribosyl)imidazole-4-carboxamide = 5-formamido-1-(5-phospho-D-ribosyl)imidazole-4-carboxamide + (6S)-5,6,7,8-tetrahydrofolate. It carries out the reaction IMP + H2O = 5-formamido-1-(5-phospho-D-ribosyl)imidazole-4-carboxamide. It functions in the pathway purine metabolism; IMP biosynthesis via de novo pathway; 5-formamido-1-(5-phospho-D-ribosyl)imidazole-4-carboxamide from 5-amino-1-(5-phospho-D-ribosyl)imidazole-4-carboxamide (10-formyl THF route): step 1/1. It participates in purine metabolism; IMP biosynthesis via de novo pathway; IMP from 5-formamido-1-(5-phospho-D-ribosyl)imidazole-4-carboxamide: step 1/1. The sequence is that of Bifunctional purine biosynthesis protein PurH from Citrifermentans bemidjiense (strain ATCC BAA-1014 / DSM 16622 / JCM 12645 / Bem) (Geobacter bemidjiensis).